A 282-amino-acid polypeptide reads, in one-letter code: Large ribosomal subunit protein uL2 (282 aa).

2 disordered regions span residues K31 to G55 and L223 to R282. Basic residues-rich tracts occupy residues T34–G55 and V270–R282.

This sequence belongs to the universal ribosomal protein uL2 family. As to quaternary structure, part of the 50S ribosomal subunit. Forms a bridge to the 30S subunit in the 70S ribosome.

In terms of biological role, one of the primary rRNA binding proteins. Required for association of the 30S and 50S subunits to form the 70S ribosome, for tRNA binding and peptide bond formation. It has been suggested to have peptidyltransferase activity; this is somewhat controversial. Makes several contacts with the 16S rRNA in the 70S ribosome. In Anaeromyxobacter dehalogenans (strain 2CP-C), this protein is Large ribosomal subunit protein uL2.